Consider the following 372-residue polypeptide: Aminomethyltransferase (372 aa).

The protein belongs to the GcvT family. As to quaternary structure, the glycine cleavage system is composed of four proteins: P, T, L and H.

The enzyme catalyses N(6)-[(R)-S(8)-aminomethyldihydrolipoyl]-L-lysyl-[protein] + (6S)-5,6,7,8-tetrahydrofolate = N(6)-[(R)-dihydrolipoyl]-L-lysyl-[protein] + (6R)-5,10-methylene-5,6,7,8-tetrahydrofolate + NH4(+). Its function is as follows. The glycine cleavage system catalyzes the degradation of glycine. The sequence is that of Aminomethyltransferase from Prochlorococcus marinus (strain NATL1A).